We begin with the raw amino-acid sequence, 398 residues long: O-methyltransferase aoiO (398 aa).

S-adenosyl-L-methionine is bound at residue D251. H299 acts as the Proton acceptor in catalysis.

The protein belongs to the class I-like SAM-binding methyltransferase superfamily. Cation-independent O-methyltransferase family.

O-methyltransferase; part of the gene cluster that mediates the biosynthesis of a methylated derivative of known natural products orthosporin and diaporthin. Seems not to be involved in the biosynthesis of the identified final product of the pathway and its function has still to be determined. The protein is O-methyltransferase aoiO of Aspergillus oryzae (strain ATCC 42149 / RIB 40) (Yellow koji mold).